A 900-amino-acid polypeptide reads, in one-letter code: Translation initiation factor IF-2 (900 aa).

Disordered regions lie at residues 30–77 (GEFV…SLDK) and 89–291 (NGKA…YDSM). Positions 89-112 (NGKATAAPAKAADSGGAAIVSPTT) are enriched in low complexity. Residues 113-129 (PAAPEPPTAVPPSPQAP) are compositionally biased toward pro residues. The span at 175–187 (PGTARPGVPRPGA) shows a compositional bias: low complexity. Residues 215 to 271 (GRPGAPGAGRSDAGGGNYRGGGVGAAPGTGFRGRPGGGGGGRPGQRGGAAGAFGRPG) are compositionally biased toward gly residues. Over residues 275–284 (RRGRKSKRQK) the composition is skewed to basic residues. Residues 396–567 (VRPPVVTVMG…AVLLTADAAL (172 aa)) form the tr-type G domain. A G1 region spans residues 405-412 (GHVDHGKT). GTP is bound at residue 405-412 (GHVDHGKT). Residues 430 to 434 (GITQH) are G2. Positions 455–458 (DTPG) are G3. GTP is bound by residues 455-459 (DTPGH) and 509-512 (NKID). The segment at 509 to 512 (NKID) is G4. The G5 stretch occupies residues 545-547 (SAK).

It belongs to the TRAFAC class translation factor GTPase superfamily. Classic translation factor GTPase family. IF-2 subfamily.

It localises to the cytoplasm. Its function is as follows. One of the essential components for the initiation of protein synthesis. Protects formylmethionyl-tRNA from spontaneous hydrolysis and promotes its binding to the 30S ribosomal subunits. Also involved in the hydrolysis of GTP during the formation of the 70S ribosomal complex. This is Translation initiation factor IF-2 from Mycobacterium bovis (strain BCG / Pasteur 1173P2).